We begin with the raw amino-acid sequence, 223 residues long: UPF0441 protein YgiB (223 aa).

The span at 178–195 (TVPKTAMAPKPATTTTVT) shows a compositional bias: low complexity. Positions 178–223 (TVPKTAMAPKPATTTTVTRGGFGESVAKQSTMQRSAAGTSTRSMGG) are disordered. The segment covering 204–223 (AKQSTMQRSAAGTSTRSMGG) has biased composition (polar residues).

Belongs to the UPF0441 family.

In Salmonella paratyphi B (strain ATCC BAA-1250 / SPB7), this protein is UPF0441 protein YgiB.